Here is a 347-residue protein sequence, read N- to C-terminus: GMP reductase (347 aa).

108–131 (ADFEKTVQILALNPALNFVCIDVA) lines the NADP(+) pocket. Residues Gly-181 and Gly-183 each coordinate K(+). Residue Cys-186 is the Thioimidate intermediate of the active site. Residue 216 to 239 (IVSDGGCTMPGDVAKAFGGGADFV) coordinates NADP(+).

It belongs to the IMPDH/GMPR family. GuaC type 1 subfamily. As to quaternary structure, homotetramer.

It carries out the reaction IMP + NH4(+) + NADP(+) = GMP + NADPH + 2 H(+). Catalyzes the irreversible NADPH-dependent deamination of GMP to IMP. It functions in the conversion of nucleobase, nucleoside and nucleotide derivatives of G to A nucleotides, and in maintaining the intracellular balance of A and G nucleotides. In Salmonella paratyphi C (strain RKS4594), this protein is GMP reductase.